The primary structure comprises 66 residues: ATP synthase protein 8 (66 aa).

A helical transmembrane segment spans residues 8 to 24; that stretch reads PWPMVIMSMILTLFYIT. Lysine 54 is subject to N6-acetyllysine; alternate. Lysine 54 carries the post-translational modification N6-succinyllysine; alternate. The residue at position 57 (lysine 57) is an N6-acetyllysine.

It belongs to the ATPase protein 8 family. As to quaternary structure, F-type ATPases have 2 components, CF(1) - the catalytic core - and CF(0) - the membrane proton channel. Component of an ATP synthase complex composed of ATP5PB, ATP5MC1, ATP5F1E, ATP5PD, ATP5ME, ATP5PF, ATP5MF, MT-ATP6, MT-ATP8, ATP5F1A, ATP5F1B, ATP5F1D, ATP5F1C, ATP5PO, ATP5MG, ATP5MK and ATP5MJ. Interacts with PRICKLE3.

Its subcellular location is the mitochondrion membrane. Its function is as follows. Mitochondrial membrane ATP synthase (F(1)F(0) ATP synthase or Complex V) produces ATP from ADP in the presence of a proton gradient across the membrane which is generated by electron transport complexes of the respiratory chain. F-type ATPases consist of two structural domains, F(1) - containing the extramembraneous catalytic core and F(0) - containing the membrane proton channel, linked together by a central stalk and a peripheral stalk. During catalysis, ATP synthesis in the catalytic domain of F(1) is coupled via a rotary mechanism of the central stalk subunits to proton translocation. Part of the complex F(0) domain. Minor subunit located with subunit a in the membrane. The polypeptide is ATP synthase protein 8 (MT-ATP8) (Alouatta sara (Bolivian red howler monkey)).